A 1048-amino-acid chain; its full sequence is Putative cation efflux system protein SilA (1048 aa).

Transmembrane regions (helical) follow at residues 14 to 34, 125 to 145, 338 to 358, 363 to 383, 391 to 411, 446 to 466, 485 to 505, 539 to 559, 737 to 757, 871 to 891, 897 to 917, 928 to 948, 985 to 1005, and 1012 to 1032; these read FLVM…IINT, VSSE…YALV, LSSK…LFLW, ALVA…VMHF, MSLG…IVMI, VGPA…PIFT, SMAG…GFWI, TLLV…QVGG, GMTV…AMVG, KLKL…YLAF, ALLI…FLYW, TGFI…LMYL, AMTV…TGAG, and IAAP…FIIP.

The protein belongs to the resistance-nodulation-cell division (RND) (TC 2.A.6) family.

The protein localises to the cell inner membrane. Component of the sil cation-efflux system that confers resistance to silver. May be part of a three-component cation/proton antiporter. The polypeptide is Putative cation efflux system protein SilA (silA) (Salmonella typhimurium).